The primary structure comprises 515 residues: Fatty acyl-CoA reductase 1 (515 aa).

Residues 1–465 (MVSIPEYYEG…ARKHLNKLRN (465 aa)) are Cytoplasmic-facing. The tract at residues 451–507 (SGLPAARKHLNKLRNIRYGFNTILVILIWRIFIARSQMARNIWYFVVSLCYKFLSYF) is necessary and sufficient for PEX19-mediated localization into peroxisome membrane. Residues 466-483 (IRYGFNTILVILIWRIFI) form a helical membrane-spanning segment. Topologically, residues 484–515 (ARSQMARNIWYFVVSLCYKFLSYFRASSTMRY) are peroxisomal.

The protein belongs to the fatty acyl-CoA reductase family. Interacts with PEX19; PEX19 mediates the targeting of FAR1 to peroxisomes. Widely expressed. Expressed in all tissues examined. Highest expression seen in preputial gland. Expressed in the brain where large quantities of ether lipids are synthesized.

It localises to the peroxisome membrane. It catalyses the reaction a long-chain fatty acyl-CoA + 2 NADPH + 2 H(+) = a long-chain primary fatty alcohol + 2 NADP(+) + CoA. The enzyme catalyses hexadecanoyl-CoA + 2 NADPH + 2 H(+) = hexadecan-1-ol + 2 NADP(+) + CoA. The catalysed reaction is octadecanoyl-CoA + 2 NADPH + 2 H(+) = octadecan-1-ol + 2 NADP(+) + CoA. It carries out the reaction (9Z)-octadecenoyl-CoA + 2 NADPH + 2 H(+) = (9Z)-octadecen-1-ol + 2 NADP(+) + CoA. It catalyses the reaction (9Z,12Z)-octadecadienoyl-CoA + 2 NADPH + 2 H(+) = (9Z,12Z)-octadecadien-1-ol + 2 NADP(+) + CoA. The enzyme catalyses eicosanoyl-CoA + 2 NADPH + 2 H(+) = eicosan-1-ol + 2 NADP(+) + CoA. The catalysed reaction is 16-methylheptadecanoyl-CoA + 2 NADPH + 2 H(+) = 16-methylheptadecan-1-ol + 2 NADP(+) + CoA. It carries out the reaction 18-methylnonadecanoyl-CoA + 2 NADPH + 2 H(+) = 18-methylnonadecan-1-ol + 2 NADP(+) + CoA. Its function is as follows. Catalyzes the reduction of saturated and unsaturated C16 or C18 fatty acyl-CoA to fatty alcohols. It plays an essential role in the production of ether lipids/plasmalogens which synthesis requires fatty alcohols. In parallel, it is also required for wax monoesters production since fatty alcohols also constitute a substrate for their synthesis. The chain is Fatty acyl-CoA reductase 1 from Mus musculus (Mouse).